We begin with the raw amino-acid sequence, 104 residues long: Probable RNA-binding protein PA4753 (104 aa).

The 97-residue stretch at 1–97 folds into the CRM domain; it reads MALTQEQKKQ…NPKPNKNLSN (97 aa).

In Pseudomonas aeruginosa (strain ATCC 15692 / DSM 22644 / CIP 104116 / JCM 14847 / LMG 12228 / 1C / PRS 101 / PAO1), this protein is Probable RNA-binding protein PA4753.